The chain runs to 198 residues: MENTGSRELVIKEIKLFNKWSYDFIEVRDPSLKKYICLKPVYLPHTGGRHEHRRFGKTHVPIVERLINKVMRPGRNMGKKHLAYHIVKKAFDIIHIKTGENPIQVLVRAIENAAPREETTRIMYGGITYHVSVDVAPLRRIDLALRHLTEGARMKAFHSPIPIEEALAEEIVLAASNDPKSYAIQKKEEIERIALSSR.

The protein belongs to the universal ribosomal protein uS7 family. Part of the 30S ribosomal subunit.

Its function is as follows. One of the primary rRNA binding proteins, it binds directly to 16S rRNA where it nucleates assembly of the head domain of the 30S subunit. Is located at the subunit interface close to the decoding center. The protein is Small ribosomal subunit protein uS7 of Desulfurococcus mucosus (Desulfurococcus mobilis).